The chain runs to 426 residues: Chaperone SurA (426 aa).

An N-terminal signal peptide occupies residues 1-13 (MLGALFLGTAANA). PpiC domains follow at residues 164–265 (SEEL…KLLE) and 274–373 (RDEV…EVLG).

The protein localises to the periplasm. The catalysed reaction is [protein]-peptidylproline (omega=180) = [protein]-peptidylproline (omega=0). Its function is as follows. Chaperone involved in the correct folding and assembly of outer membrane proteins. Recognizes specific patterns of aromatic residues and the orientation of their side chains, which are found more frequently in integral outer membrane proteins. May act in both early periplasmic and late outer membrane-associated steps of protein maturation. The sequence is that of Chaperone SurA from Pseudomonas fluorescens (strain Pf0-1).